The sequence spans 269 residues: 4-hydroxy-tetrahydrodipicolinate reductase (269 aa).

NAD(+) is bound by residues 8–13 (GASGRM), Glu-34, 98–100 (GTT), and 122–125 (APNM). The active-site Proton donor/acceptor is His-155. His-156 provides a ligand contact to (S)-2,3,4,5-tetrahydrodipicolinate. The active-site Proton donor is Lys-159. Residue 165 to 166 (GT) participates in (S)-2,3,4,5-tetrahydrodipicolinate binding.

This sequence belongs to the DapB family.

Its subcellular location is the cytoplasm. The catalysed reaction is (S)-2,3,4,5-tetrahydrodipicolinate + NAD(+) + H2O = (2S,4S)-4-hydroxy-2,3,4,5-tetrahydrodipicolinate + NADH + H(+). It catalyses the reaction (S)-2,3,4,5-tetrahydrodipicolinate + NADP(+) + H2O = (2S,4S)-4-hydroxy-2,3,4,5-tetrahydrodipicolinate + NADPH + H(+). Its pathway is amino-acid biosynthesis; L-lysine biosynthesis via DAP pathway; (S)-tetrahydrodipicolinate from L-aspartate: step 4/4. In terms of biological role, catalyzes the conversion of 4-hydroxy-tetrahydrodipicolinate (HTPA) to tetrahydrodipicolinate. In Desulfotalea psychrophila (strain LSv54 / DSM 12343), this protein is 4-hydroxy-tetrahydrodipicolinate reductase.